The primary structure comprises 432 residues: Chorismate synthase aro-2 (432 aa).

Catalysis depends on residues histidine 17, histidine 106, and aspartate 367. The tract at residues 406–432 (LKQTINSGKDTVGNGVSENVQESDLAQ) is disordered. The segment covering 408 to 432 (QTINSGKDTVGNGVSENVQESDLAQ) has biased composition (polar residues).

Belongs to the chorismate synthase family. In terms of assembly, homotetramer.

It carries out the reaction 5-O-(1-carboxyvinyl)-3-phosphoshikimate = chorismate + phosphate. The enzyme catalyses FMNH2 + NADP(+) = FMN + NADPH + 2 H(+). Its pathway is metabolic intermediate biosynthesis; chorismate biosynthesis; chorismate from D-erythrose 4-phosphate and phosphoenolpyruvate: step 7/7. Bifunctional chorismate synthase and flavin reductase that catalyzes the conversion of 5-enolpyruvylshikimate 3-phosphate (EPSP) to form chorismate, which is the last common intermediate in the synthesis of the three aromatic amino acids phenylalanine, tyrosine and tryptophan. Acts also as a flavin reductase (FR) able to generate reduced flavin mononucleotide in the presence of NADPH. This Neurospora crassa (strain ATCC 24698 / 74-OR23-1A / CBS 708.71 / DSM 1257 / FGSC 987) protein is Chorismate synthase aro-2.